Reading from the N-terminus, the 403-residue chain is Ribonuclease T2-like (403 aa).

Residues 1 to 19 form the signal peptide; sequence MLALILTISICIFLKGSTC. Intrachain disulfides connect Cys36/Cys55, Cys44/Cys91, Cys54/Cys158, and Cys99/Cys150. An N-linked (GlcNAc...) asparagine glycan is attached at Asn78. Residues His84, Glu143, and His147 contribute to the active site. A glycan (N-linked (GlcNAc...) asparagine) is linked at Asn175. The cysteines at positions 224 and 259 are disulfide-linked. The segment at 268 to 288 is disordered; that stretch reads PKNGFNPGPQPPKSPRKGYLE.

This sequence belongs to the RNase T2 family.

Its subcellular location is the vacuole lumen. The protein localises to the cytoplasm. The enzyme catalyses a ribonucleotidyl-ribonucleotide-RNA + H2O = a 3'-end 3'-phospho-ribonucleotide-RNA + a 5'-end dephospho-ribonucleoside-RNA + H(+). In terms of biological role, rnase which modulates cell survival under stress conditions. Released from the vacuole to the cytoplasm during stress to promote tRNA and rRNA cleavage and to activate separately a downstream pathway that promotes cell death. Involved in cell size, vacuolar morphology and growth at high temperatures and high salt concentration. The protein is Ribonuclease T2-like (RNY1) of Debaryomyces hansenii (strain ATCC 36239 / CBS 767 / BCRC 21394 / JCM 1990 / NBRC 0083 / IGC 2968) (Yeast).